A 1371-amino-acid polypeptide reads, in one-letter code: MTEDIYSLFQKPKNPRDFDAIRIKLASPEKIREWSYGEVKKPETINYRTFKPEPEGLFCAKIFGPIKDWECLCGKYKRMKHKGVICDKCGVEVIQSKVRRERMGHIELAAPVAHIWFVRGVPSKMGLLLDLSVRQLERVIYYEDYIVIDPGDTPLKEKDILTEDEYKKCISQYGNKFKAGMGAEAVRELLKKIDLDIVAQELKEKIEAATSTGIKRKLTKRLKVIEAFKNSGNRPEWMILDIVPVLPPELRPLVPLDGGRFASSDLNDLYRRVINRNNRLKRLMELKAPSVIIRNEKRMLQESVDTLFDNTKRSKALKAGTRRPLKSLSDMIKGKQGRFRQNLLGKRVDYSGRSVIVVGPELDMHQCGLPKSMALELFKPFVFNKLEEKGYATTIKQAKRLVEQERSEVWDALEEVIQEHPVLLNRAPTLHRLGIQAFDPVLVEGKAIKLHPLVCTAFNADFDGDQMAVHVPLSYEAQVEARVLMMSVGNLLSPANGKPIVVPTQDMVLGIYYLTKEKHDAKGAGKVFSDPEEVILAYQCKAVEKHAPIKVKLNGEFVNTTVGRILFREIVPEGVPFQMINKELTKKELGKLIEYIHYNFGKRDTVLFLNKLEKLGFEVATQSGISICIDDMHIPSKKTELIKEAEAQVMEVQRQYAEGLITQGERYNKVIDIWANVTERVADEMMKELGAERGKEFTPEELAERRSFNSIFMMADSGARGSIAQIRQLAGMRGLMAKPSGEIIETPITANFREGLTPLQYFISTHGARKGLADTALKTANAGYLTRRLVDVAQDIFLIEHDCGTKDGIYITALIEGGEIVMPLEERIYGRTLAEDIKDPLTGEIIAKRDTVIDQALAKKIVDSGIDRLKIRSVLTCRTKFGVCSKCYGMDLARSEPVEIGEAIGVIAAQSIGEPGTQLTMRTFHIGGAATKIVEQAVLEAKGSGTVRFKNIHYVERKDGSLVVLNRNAMIVITDSSGREREKYNLVYGAKIIVKEGQIVESGQRLAEWDAYTTPIITEIGGKIALGDMVEGVTFKEETDPTTGLSHKIIIDYPATYRPRVTIKDKDGKTAKLPSGTAARYLLPAGAILVVDKGDIVEPGDILAKIPRETIKTKDITGGLPRVAELFEARRPREAAIVSEIDGIVEFKGSQKGSRVIVVRGADETREYLIPKGKHVIVHDGDWVKAGEPLIDGSINPHSILEILGPTELQRYLVDEIQKVYRLQGVSIHDKHIEVIVRQMMKKVRIEDPGDTSFLIGDEVDRFIFIEENEKVIARGGRPAQARPLLLGITKAALSTESWVSAASFQETTRVLTDAAIEARIDELRGLKENVIMGRIIPAGTGSPVYKDTLIKGEFYSMQIEHFSEESIEEN.

Zn(2+) contacts are provided by Cys71, Cys73, Cys86, and Cys89. Asp461, Asp463, and Asp465 together coordinate Mg(2+). The Zn(2+) site is built by Cys803, Cys877, Cys884, and Cys887.

This sequence belongs to the RNA polymerase beta' chain family. In terms of assembly, the RNAP catalytic core consists of 2 alpha, 1 beta, 1 beta' and 1 omega subunit. When a sigma factor is associated with the core the holoenzyme is formed, which can initiate transcription. The cofactor is Mg(2+). It depends on Zn(2+) as a cofactor.

The catalysed reaction is RNA(n) + a ribonucleoside 5'-triphosphate = RNA(n+1) + diphosphate. In terms of biological role, DNA-dependent RNA polymerase catalyzes the transcription of DNA into RNA using the four ribonucleoside triphosphates as substrates. This chain is DNA-directed RNA polymerase subunit beta', found in Thermodesulfovibrio yellowstonii (strain ATCC 51303 / DSM 11347 / YP87).